A 308-amino-acid polypeptide reads, in one-letter code: Tyrosine recombinase XerD (308 aa).

Residues 13–97 (PSSTEAIQRF…VFKRFFQWAL (85 aa)) form the Core-binding (CB) domain. The region spanning 118–302 (RVPKTLSEAQ…ARERLRTLHA (185 aa)) is the Tyr recombinase domain. Catalysis depends on residues Arg158, Lys183, His254, Arg257, and His280. Tyr289 serves as the catalytic O-(3'-phospho-DNA)-tyrosine intermediate.

The protein belongs to the 'phage' integrase family. XerD subfamily. Forms a cyclic heterotetrameric complex composed of two molecules of XerC and two molecules of XerD.

The protein resides in the cytoplasm. Functionally, site-specific tyrosine recombinase, which acts by catalyzing the cutting and rejoining of the recombining DNA molecules. The XerC-XerD complex is essential to convert dimers of the bacterial chromosome into monomers to permit their segregation at cell division. It also contributes to the segregational stability of plasmids. The protein is Tyrosine recombinase XerD of Ralstonia nicotianae (strain ATCC BAA-1114 / GMI1000) (Ralstonia solanacearum).